The chain runs to 222 residues: MKPDIKICGLKTPEAIDRALKRGATHIGFIFFEKSPRYIEPDLAAKLAEPARGKAKIVAVVVDPTNDELDEIVSLLKPDILQLHGNESPEHVLTIKALYGLPVMKVFSVRTAADLKRVEAYIGIADRFLFDAKAPKGSELPGGNGISFDWSLLSWLDGSIDYMLSGGLNKDNVANALANTTARGIDVSSGVESAPGVKSVAMIDEFFDAVEGADAPVMASGS.

The protein belongs to the TrpF family.

The enzyme catalyses N-(5-phospho-beta-D-ribosyl)anthranilate = 1-(2-carboxyphenylamino)-1-deoxy-D-ribulose 5-phosphate. The protein operates within amino-acid biosynthesis; L-tryptophan biosynthesis; L-tryptophan from chorismate: step 3/5. The sequence is that of N-(5'-phosphoribosyl)anthranilate isomerase from Rhizobium etli (strain CIAT 652).